The sequence spans 371 residues: 4-hydroxyphenylpyruvate dioxygenase-like protein (371 aa).

2 consecutive VOC domains span residues 7–135 (RLCH…LLQR) and 160–328 (HVDH…VFTK). His163, His258, and Glu339 together coordinate Fe cation.

This sequence belongs to the 4HPPD family. It depends on Fe cation as a cofactor.

It localises to the mitochondrion. The catalysed reaction is 3-(4-hydroxyphenyl)pyruvate + O2 = (S)-4-hydroxymandelate + CO2. Its function is as follows. Iron-dependent dioxygenase that catalyzes the conversion of 4-hydroxyphenylpyruvate (4-HPPA) to 4-hydroxymandelate (4-HMA) in the mitochondria, one of the steps in the biosynthesis of coenzyme Q10 from tyrosine. The protein is 4-hydroxyphenylpyruvate dioxygenase-like protein of Rattus norvegicus (Rat).